Here is a 216-residue protein sequence, read N- to C-terminus: 3-isopropylmalate dehydratase small subunit (216 aa).

It belongs to the LeuD family. LeuD type 1 subfamily. Heterodimer of LeuC and LeuD.

It catalyses the reaction (2R,3S)-3-isopropylmalate = (2S)-2-isopropylmalate. The protein operates within amino-acid biosynthesis; L-leucine biosynthesis; L-leucine from 3-methyl-2-oxobutanoate: step 2/4. Catalyzes the isomerization between 2-isopropylmalate and 3-isopropylmalate, via the formation of 2-isopropylmaleate. The sequence is that of 3-isopropylmalate dehydratase small subunit from Psychrobacter arcticus (strain DSM 17307 / VKM B-2377 / 273-4).